Reading from the N-terminus, the 38-residue chain is Photosystem II reaction center protein L (38 aa).

A helical membrane pass occupies residues 17-37; it reads SLYWGLLLMFVLAVLFSSYFF.

This sequence belongs to the PsbL family. PSII is composed of 1 copy each of membrane proteins PsbA, PsbB, PsbC, PsbD, PsbE, PsbF, PsbH, PsbI, PsbJ, PsbK, PsbL, PsbM, PsbT, PsbX, PsbY, PsbZ, Psb30/Ycf12, at least 3 peripheral proteins of the oxygen-evolving complex and a large number of cofactors. It forms dimeric complexes.

It localises to the plastid. The protein resides in the chloroplast thylakoid membrane. Functionally, one of the components of the core complex of photosystem II (PSII). PSII is a light-driven water:plastoquinone oxidoreductase that uses light energy to abstract electrons from H(2)O, generating O(2) and a proton gradient subsequently used for ATP formation. It consists of a core antenna complex that captures photons, and an electron transfer chain that converts photonic excitation into a charge separation. This subunit is found at the monomer-monomer interface and is required for correct PSII assembly and/or dimerization. This chain is Photosystem II reaction center protein L, found in Emiliania huxleyi (Coccolithophore).